The primary structure comprises 186 residues: Elongation factor P (186 aa).

This sequence belongs to the elongation factor P family.

It localises to the cytoplasm. It functions in the pathway protein biosynthesis; polypeptide chain elongation. In terms of biological role, involved in peptide bond synthesis. Stimulates efficient translation and peptide-bond synthesis on native or reconstituted 70S ribosomes in vitro. Probably functions indirectly by altering the affinity of the ribosome for aminoacyl-tRNA, thus increasing their reactivity as acceptors for peptidyl transferase. This chain is Elongation factor P, found in Streptococcus mutans serotype c (strain ATCC 700610 / UA159).